A 188-amino-acid chain; its full sequence is MKAGALELGHASKTTKSGVNRGMSILDLFIRIIAIIATLGSAIAMGTTNETLPFFTQFVRFKAKYSDLPTFTFFVVANAIVSAYLVLSLGLSIYHIMRSRAQATRIALIFFDAAMLGLLTGGASASAAIVYLAHKGNRKTNWFPICQQYDSFCHRTSGSLVGSFAGSVLIILLIFLSAIALSRQSLNH.

The Cytoplasmic segment spans residues 1–24 (MKAGALELGHASKTTKSGVNRGMS). A helical transmembrane segment spans residues 25–45 (ILDLFIRIIAIIATLGSAIAM). The Extracellular segment spans residues 46 to 72 (GTTNETLPFFTQFVRFKAKYSDLPTFT). N-linked (GlcNAc...) asparagine glycosylation is present at Asn49. The helical transmembrane segment at 73 to 93 (FFVVANAIVSAYLVLSLGLSI) threads the bilayer. Topologically, residues 94-105 (YHIMRSRAQATR) are cytoplasmic. Residues 106-126 (IALIFFDAAMLGLLTGGASAS) traverse the membrane as a helical segment. Topologically, residues 127-159 (AAIVYLAHKGNRKTNWFPICQQYDSFCHRTSGS) are extracellular. A helical membrane pass occupies residues 160–180 (LVGSFAGSVLIILLIFLSAIA). The Cytoplasmic portion of the chain corresponds to 181–188 (LSRQSLNH).

The protein belongs to the Casparian strip membrane proteins (CASP) family. In terms of assembly, homodimer and heterodimers.

The protein resides in the cell membrane. Regulates membrane-cell wall junctions and localized cell wall deposition. Required for establishment of the Casparian strip membrane domain (CSD) and the subsequent formation of Casparian strips, a cell wall modification of the root endodermis that determines an apoplastic barrier between the intraorganismal apoplasm and the extraorganismal apoplasm and prevents lateral diffusion. This is Casparian strip membrane protein 1 from Solanum tuberosum (Potato).